We begin with the raw amino-acid sequence, 215 residues long: Large ribosomal subunit protein uL4 (215 aa).

A disordered region spans residues 46 to 72 (TAKSKNRAEVSGGGRKPWAQKGGGRAR). Residues 56 to 71 (SGGGRKPWAQKGGGRA) are compositionally biased toward gly residues.

This sequence belongs to the universal ribosomal protein uL4 family. As to quaternary structure, part of the 50S ribosomal subunit.

One of the primary rRNA binding proteins, this protein initially binds near the 5'-end of the 23S rRNA. It is important during the early stages of 50S assembly. It makes multiple contacts with different domains of the 23S rRNA in the assembled 50S subunit and ribosome. Its function is as follows. Forms part of the polypeptide exit tunnel. In Helicobacter pylori (strain Shi470), this protein is Large ribosomal subunit protein uL4.